The sequence spans 360 residues: Isocitrate dehydrogenase [NAD] regulatory subunit B, mitochondrial (360 aa).

The transit peptide at 1-113 directs the protein to the mitochondrion; the sequence is MLGRLRTVVK…MELRKALDLY (113 aa). The substrate site is built by Ser-101, Asn-103, Arg-107, and Arg-140. Asp-227 contacts Mg(2+). Residues 284–290 and Asn-297 each bind NADP(+); that span reads HHVAADI.

The protein belongs to the isocitrate and isopropylmalate dehydrogenases family. As to quaternary structure, heterooligomer of catalytic and regulatory subunits. Requires Mg(2+) as cofactor. It depends on Mn(2+) as a cofactor.

The protein resides in the mitochondrion. It catalyses the reaction D-threo-isocitrate + NAD(+) = 2-oxoglutarate + CO2 + NADH. In terms of biological role, performs an essential role in the oxidative function of the citric acid cycle. The protein is Isocitrate dehydrogenase [NAD] regulatory subunit B, mitochondrial (idhB) of Dictyostelium discoideum (Social amoeba).